The primary structure comprises 389 residues: Major outer membrane porin (389 aa).

The signal sequence occupies residues 1 to 22 (MKKLLKSALLFAATGSALSLQA).

Belongs to the chlamydial porin (CP) (TC 1.B.2) family. In terms of assembly, part of a disulfide cross-linked outer membrane complex (COMC) composed of the major outer membrane porin (MOMP), the small cysteine-rich protein (OmcA) and the large cysteine-rich periplasmic protein (OmcB).

It is found in the cell outer membrane. In terms of biological role, in elementary bodies (EBs, the infectious stage, which is able to survive outside the host cell) provides the structural integrity of the outer envelope through disulfide cross-links with the small cysteine-rich protein and the large cysteine-rich periplasmic protein. It has been described in publications as the Sarkosyl-insoluble COMC (Chlamydia outer membrane complex), and serves as the functional equivalent of peptidoglycan. Functionally, permits diffusion of specific solutes through the outer membrane. The sequence is that of Major outer membrane porin (ompA) from Chlamydia abortus (strain DSM 27085 / S26/3) (Chlamydophila abortus).